The primary structure comprises 890 residues: MTDVTIKTLAAERQTSVERLVQQFADAGIRKSADDSVSAKEKQTLIDHLNQKNSGPDKLTLQRKTRSTLNIPGTGGKSKSVQIEVRKKRTFVKRDPQEAERLAAEEQAQREAEEQARREAEESAKREAQQKAEREAAEQAKREAAEQAKREAAEKDKVSNQQDDMTKNAQAEKARREQEAAELKRKAEEEARRKLEEEARRVAEEARRMAEENKWTDNAEPTEDSSDYHVTTSQHARQAEDESDREVEGGRGRGRNAKAARPKKGNKHAESKADREEARAAVRGGKGGKRKGSSLQQGFQKPAQAVNRDVVIGETITVGELANKMAVKGSQVIKAMMKLGAMATINQVIDQETAQLVAEEMGHKVILRRENELEEAVMSDRDTGAAAEPRAPVVTIMGHVDHGKTSLLDYIRSTKVASGEAGGITQHIGAYHVETENGMITFLDTPGHAAFTSMRARGAQATDIVVLVVAADDGVMPQTIEAIQHAKAAQVPVVVAVNKIDKPEADPDRVKNELSQYGILPEEWGGESQFVHVSAKAGTGIDELLDAILLQAEVLELKAVRKGMASGAVIESFLDKGRGPVATVLVREGTLHKGDIVLCGFEYGRVRAMRNELGQEVLEAGPSIPVEILGLSGVPAAGDEVTVVRDEKKAREVALYRQGKFREVKLARQQKSKLENMFANMTEGEVHEVNIVLKADVQGSVEAISDSLLKLSTDEVKVKIIGSGVGGITETDATLAAASNAILVGFNVRADASARKVIEAESLDLRYYSVIYNLIDEVKAAMSGMLSPELKQQIIGLAEVRDVFKSPKFGAIAGCMVTEGVVKRHNPIRVLRDNVVIYEGELESLRRFKDDVNEVRNGMECGIGVKNYNDVRTGDVIEVFEIIEIQRTIA.

The segment at 45 to 303 (LIDHLNQKNS…SLQQGFQKPA (259 aa)) is disordered. Residues 67 to 81 (STLNIPGTGGKSKSV) show a composition bias toward polar residues. Over residues 92–217 (VKRDPQEAER…RMAEENKWTD (126 aa)) the composition is skewed to basic and acidic residues. The span at 252–266 (GRGRNAKAARPKKGN) shows a compositional bias: basic residues. Over residues 267–280 (KHAESKADREEARA) the composition is skewed to basic and acidic residues. Residues 389 to 558 (PRAPVVTIMG…LLQAEVLELK (170 aa)) enclose the tr-type G domain. The tract at residues 398–405 (GHVDHGKT) is G1. GTP is bound at residue 398 to 405 (GHVDHGKT). The G2 stretch occupies residues 423 to 427 (GITQH). Residues 444-447 (DTPG) form a G3 region. Residues 444 to 448 (DTPGH) and 498 to 501 (NKID) contribute to the GTP site. A G4 region spans residues 498–501 (NKID). Residues 534-536 (SAK) form a G5 region. K808 bears the N6-acetyllysine mark.

This sequence belongs to the TRAFAC class translation factor GTPase superfamily. Classic translation factor GTPase family. IF-2 subfamily.

It localises to the cytoplasm. In terms of biological role, one of the essential components for the initiation of protein synthesis. Protects formylmethionyl-tRNA from spontaneous hydrolysis and promotes its binding to the 30S ribosomal subunits. Also involved in the hydrolysis of GTP during the formation of the 70S ribosomal complex. The polypeptide is Translation initiation factor IF-2 (Shigella boydii serotype 18 (strain CDC 3083-94 / BS512)).